The chain runs to 238 residues: MLDREGFRPNVGIILINARNEVFWGKRIGEHSWQFPQGGIKYGETPEQAMYRELHEEVGLLPEHVRIVGRTRDWLRYEVPDKFIRREIRGHYRGQKQIWFLLRMVGRDCDIQLRATEHPEFDAWRWSQYWVPLDAVIEFKREVYQMALSELSRFVQRSHRAPLSPYGRGGPHRERDGRDNRAGGQAGRNDQNTRGQRQPPTLMVTTSTVIVETVITSRPAAQPIDSSNPDDTPSKDSL.

Residues 6 to 149 (GFRPNVGIIL…KREVYQMALS (144 aa)) enclose the Nudix hydrolase domain. Positions 38–59 (GGIKYGETPEQAMYRELHEEVG) match the Nudix box motif. Positions 161 to 238 (APLSPYGRGG…PDDTPSKDSL (78 aa)) are disordered. The span at 171-181 (PHRERDGRDNR) shows a compositional bias: basic and acidic residues. Residues 188-199 (RNDQNTRGQRQP) are compositionally biased toward polar residues. Positions 204–217 (VTTSTVIVETVITS) are enriched in low complexity.

Belongs to the Nudix hydrolase family. RppH subfamily. A divalent metal cation serves as cofactor.

Its function is as follows. Accelerates the degradation of transcripts by removing pyrophosphate from the 5'-end of triphosphorylated RNA, leading to a more labile monophosphorylated state that can stimulate subsequent ribonuclease cleavage. This Ralstonia nicotianae (strain ATCC BAA-1114 / GMI1000) (Ralstonia solanacearum) protein is RNA pyrophosphohydrolase.